We begin with the raw amino-acid sequence, 467 residues long: Glutamate--tRNA ligase (467 aa).

The 'HIGH' region signature appears at 15-25; sequence PSPTGYLHVGG. The 'KMSKS' region motif lies at 249–253; that stretch reads KLSKR. Lysine 252 is a binding site for ATP.

Belongs to the class-I aminoacyl-tRNA synthetase family. Glutamate--tRNA ligase type 1 subfamily. Monomer.

Its subcellular location is the cytoplasm. The enzyme catalyses tRNA(Glu) + L-glutamate + ATP = L-glutamyl-tRNA(Glu) + AMP + diphosphate. Functionally, catalyzes the attachment of glutamate to tRNA(Glu) in a two-step reaction: glutamate is first activated by ATP to form Glu-AMP and then transferred to the acceptor end of tRNA(Glu). This chain is Glutamate--tRNA ligase, found in Coprothermobacter proteolyticus (strain ATCC 35245 / DSM 5265 / OCM 4 / BT).